The sequence spans 117 residues: UPF0102 protein Spro_4337 (117 aa).

Belongs to the UPF0102 family.

This is UPF0102 protein Spro_4337 from Serratia proteamaculans (strain 568).